A 223-amino-acid polypeptide reads, in one-letter code: DNA mismatch repair protein MutH (223 aa).

Belongs to the MutH family.

The protein localises to the cytoplasm. Its function is as follows. Sequence-specific endonuclease that cleaves unmethylated GATC sequences. It is involved in DNA mismatch repair. The polypeptide is DNA mismatch repair protein MutH (Shewanella baltica (strain OS185)).